The primary structure comprises 348 residues: D-alanine--D-alanine ligase (348 aa).

The ATP-grasp domain occupies 132–334; sequence KRVLESIGIP…YPDLIEELVT (203 aa). Residue 162–217 coordinates ATP; it reads LARLTFPIFVKPANMGSSVGISKAQTKVELRKAIQLALTYDSRVLIEQGVVAREIE. Residues Asp288, Glu301, and Asn303 each coordinate Mg(2+).

Belongs to the D-alanine--D-alanine ligase family. Requires Mg(2+) as cofactor. Mn(2+) serves as cofactor.

Its subcellular location is the cytoplasm. The enzyme catalyses 2 D-alanine + ATP = D-alanyl-D-alanine + ADP + phosphate + H(+). It participates in cell wall biogenesis; peptidoglycan biosynthesis. Cell wall formation. The polypeptide is D-alanine--D-alanine ligase (Streptococcus pyogenes serotype M6 (strain ATCC BAA-946 / MGAS10394)).